The following is a 402-amino-acid chain: MQMSSALACLILGLVLVSGKGFTLPLRESHTAHQATDFGVKVFQQVVQASKDRNVVFSPYGVSSVLAMLQMTTAGKTRRQIQDAMGFKVNEKGTAHALRQLSKELMGPWNKNEISTADAIFVQRDLELVQGFMPHFFKLFQTMVKQVDFSEVERARFIINDWVERHTKGMINDLLAKGAVDELTRLVLVNALYFSGQWKTPFLEASTHQRLFHKSDGSTVSVPMMAQSNKFNYTEFTTPDGLEYDVVELPYQRDTLSMFIAAPFEKDVHLSALTNILDAELIRQWKGNMTRLPRLLILPKFSLETEVDLRGPLEKLGMPDMFSATLADFTSLSDQEQLSVAQALQKVRIEVNESGTVASSSTAFVISARMAPTEMVIDRSFLFVVRHNPTETILFMGQVMEP.

The first 22 residues, 1–22 (MQMSSALACLILGLVLVSGKGF), serve as a signal peptide directing secretion. Residues N232, N288, and N352 are each glycosylated (N-linked (GlcNAc...) asparagine).

It belongs to the serpin family. As to quaternary structure, forms a heterodimer with TMPRSS7. Interacts with VTN. Binds LRP1B; binding is followed by internalization and degradation. Interacts with PPP1CB. In complex with PLAU/uPA, interacts with PLAUR/uPAR. Interacts with SORL1 and LRP1, either alone or in complex with PLAU; these interactions are abolished in the presence of LRPAP1/RAP. The ternary complex composed of PLAUR-PLAU-PAI1 also interacts with SORL1. Interacts with PLAT/tPA. Also interacts with SORL1, when complexed to PLAT/tPA.

It localises to the secreted. In terms of biological role, serine protease inhibitor. Inhibits TMPRSS7. Is a primary inhibitor of tissue-type plasminogen activator (PLAT) and urokinase-type plasminogen activator (PLAU). As PLAT inhibitor, it is required for fibrinolysis down-regulation and is responsible for the controlled degradation of blood clots. As PLAU inhibitor, it is involved in the regulation of cell adhesion and spreading. Acts as a regulator of cell migration, independently of its role as protease inhibitor. It is required for stimulation of keratinocyte migration during cutaneous injury repair. Involved in cellular and replicative senescence. Plays a role in alveolar type 2 cells senescence in the lung. Is involved in the regulation of cementogenic differentiation of periodontal ligament stem cells, and regulates odontoblast differentiation and dentin formation during odontogenesis. In Mus musculus (Mouse), this protein is Plasminogen activator inhibitor 1 (Serpine1).